Here is a 605-residue protein sequence, read N- to C-terminus: MQKNKIKTFSIIAHIDHGKSTLADRILELTNTVSKRELTNQFLDSMELEKERGISIKLNAVQLKYKDYIFQLIDTPGHVDFTYEVSRSLAASEGALLIVDATQGIQAQTLANVYLAIENKLEIIPVINKVDLPSADVDRVKQEIEDVIGIPTNSAIEVSAKTGFGVDKLLDAIVEYVPSPLDADDLKPLKALIFDSYFDPYRGVVLLIRIKEGKLKVGDKFMFMSRKHDESNTYHVIELGVKNPSETKKEFLESGEVGWVSAAIRDAKEISVGDTITHIDNPAKEALPGYKKIKAVVFTGFYPIDTKDYVQLKESLEKISLSDSSIVWEQETSKALGFGFRVGFLGLLHMEILQERLDREYNVGIIATAPSVEYKIFKTNGEIEFVSNPTMMPDRSTIEKIEEPYIEATVFIPNEYIGNLMELCQSKRGIYISLEALDDKRSKIVYELPLSETILDFFDKMKSYTKGFASFEYELIGYKESDLVKVDILLNGEKVDAFSIIAHKDKAYEHARELCIKLKDEIPRQNFEIPVQATIGGKIIARETIKAYRKDVTAKLYGGDVTRKQKLLKKQKAGKKRMKKIGSIEVPQEAFLNILKTNTDQKNKK.

Positions 4–181 (NKIKTFSIIA…AIVEYVPSPL (178 aa)) constitute a tr-type G domain. GTP contacts are provided by residues 16 to 21 (DHGKST) and 128 to 131 (NKVD).

The protein belongs to the TRAFAC class translation factor GTPase superfamily. Classic translation factor GTPase family. LepA subfamily.

It localises to the cell membrane. It catalyses the reaction GTP + H2O = GDP + phosphate + H(+). In terms of biological role, required for accurate and efficient protein synthesis under certain stress conditions. May act as a fidelity factor of the translation reaction, by catalyzing a one-codon backward translocation of tRNAs on improperly translocated ribosomes. Back-translocation proceeds from a post-translocation (POST) complex to a pre-translocation (PRE) complex, thus giving elongation factor G a second chance to translocate the tRNAs correctly. Binds to ribosomes in a GTP-dependent manner. The chain is Elongation factor 4 from Mycoplasmopsis synoviae (strain 53) (Mycoplasma synoviae).